The chain runs to 80 residues: UPF0291 protein LACR_1198 (80 aa).

Belongs to the UPF0291 family.

It localises to the cytoplasm. This Lactococcus lactis subsp. cremoris (strain SK11) protein is UPF0291 protein LACR_1198.